Consider the following 245-residue polypeptide: Biosynthetic peptidoglycan transglycosylase (245 aa).

A helical membrane pass occupies residues 19-39 (IVYAGAVFAAAWLATQLFYFV).

This sequence belongs to the glycosyltransferase 51 family.

The protein localises to the cell inner membrane. It carries out the reaction [GlcNAc-(1-&gt;4)-Mur2Ac(oyl-L-Ala-gamma-D-Glu-L-Lys-D-Ala-D-Ala)](n)-di-trans,octa-cis-undecaprenyl diphosphate + beta-D-GlcNAc-(1-&gt;4)-Mur2Ac(oyl-L-Ala-gamma-D-Glu-L-Lys-D-Ala-D-Ala)-di-trans,octa-cis-undecaprenyl diphosphate = [GlcNAc-(1-&gt;4)-Mur2Ac(oyl-L-Ala-gamma-D-Glu-L-Lys-D-Ala-D-Ala)](n+1)-di-trans,octa-cis-undecaprenyl diphosphate + di-trans,octa-cis-undecaprenyl diphosphate + H(+). The protein operates within cell wall biogenesis; peptidoglycan biosynthesis. Peptidoglycan polymerase that catalyzes glycan chain elongation from lipid-linked precursors. The chain is Biosynthetic peptidoglycan transglycosylase from Burkholderia multivorans (strain ATCC 17616 / 249).